A 515-amino-acid polypeptide reads, in one-letter code: 2-isopropylmalate synthase (515 aa).

The Pyruvate carboxyltransferase domain maps to 4–266 (ISVFDTTLRD…ETGLILKEIK (263 aa)). The Mn(2+) site is built by D13, H201, H203, and N237. The interval 391 to 515 (ELQTLQVNYG…AEVYGSKVEV (125 aa)) is regulatory domain.

The protein belongs to the alpha-IPM synthase/homocitrate synthase family. LeuA type 1 subfamily. Homodimer. Mn(2+) serves as cofactor.

The protein resides in the cytoplasm. The catalysed reaction is 3-methyl-2-oxobutanoate + acetyl-CoA + H2O = (2S)-2-isopropylmalate + CoA + H(+). Its pathway is amino-acid biosynthesis; L-leucine biosynthesis; L-leucine from 3-methyl-2-oxobutanoate: step 1/4. In terms of biological role, catalyzes the condensation of the acetyl group of acetyl-CoA with 3-methyl-2-oxobutanoate (2-ketoisovalerate) to form 3-carboxy-3-hydroxy-4-methylpentanoate (2-isopropylmalate). The sequence is that of 2-isopropylmalate synthase from Halalkalibacterium halodurans (strain ATCC BAA-125 / DSM 18197 / FERM 7344 / JCM 9153 / C-125) (Bacillus halodurans).